The chain runs to 221 residues: UPF0502 protein PA14_19450 (221 aa).

The protein belongs to the UPF0502 family.

This chain is UPF0502 protein PA14_19450, found in Pseudomonas aeruginosa (strain UCBPP-PA14).